The primary structure comprises 146 residues: 3-hydroxyacyl-[acyl-carrier-protein] dehydratase FabZ (146 aa).

The active site involves His51.

The protein belongs to the thioester dehydratase family. FabZ subfamily.

It is found in the cytoplasm. The enzyme catalyses a (3R)-hydroxyacyl-[ACP] = a (2E)-enoyl-[ACP] + H2O. Involved in unsaturated fatty acids biosynthesis. Catalyzes the dehydration of short chain beta-hydroxyacyl-ACPs and long chain saturated and unsaturated beta-hydroxyacyl-ACPs. The polypeptide is 3-hydroxyacyl-[acyl-carrier-protein] dehydratase FabZ (Staphylococcus aureus (strain Mu3 / ATCC 700698)).